A 504-amino-acid chain; its full sequence is MTDTPTQALPPKAPQAGPTVPGTVRRAVPGSAAAALVIAASHFAALSAFDPRILLVLLVIVVLASSGGLFAGLAATAVSALGLALRGLLSGDTVVADWQSLGLLTIAGAGIAVLGERLRRTRLDAVARDRALLAREAHLSSILDTVPDAMIVIDERGIMQSFSITAERLFGYSPSEVIGRNVSMLMPNPHRDQHDLYLSRYLTTGERRIIGIGRVVTGERKDGATFPMELAVGEMHSVSGRFFTGFIRDLTERQNTEARLQELQAELVHISRLTALGEMASTLAHELNQPLSAIANYIKGSRRLLDDGDPKRIPMLQGALDKAAEQALRAGQIIRRLRDFVSRGETERRVESLSKLIEEASALALVGAKEHGIQVRYQIDTSCDLVLADKVQVQQVLLNLMRNALEAMMDASRRQLLVQTTPAEDDMVTVSVCDTGHGISDEMRAQLFTPFVTTKAQGMGVGLSISRTIIEAHGGRIWAEPNAGGGTIFRFTLRTVDEEAMNDA.

The segment at 1–21 (MTDTPTQALPPKAPQAGPTVP) is disordered. Topologically, residues 1–50 (MTDTPTQALPPKAPQAGPTVPGTVRRAVPGSAAAALVIAASHFAALSAFD) are cytoplasmic. Residues 51 to 71 (PRILLVLLVIVVLASSGGLFA) traverse the membrane as a helical segment. At 72–99 (GLAATAVSALGLALRGLLSGDTVVADWQ) the chain is on the periplasmic side. The chain crosses the membrane as a helical span at residues 100–118 (SLGLLTIAGAGIAVLGERL). Over 119-504 (RRTRLDAVAR…TVDEEAMNDA (386 aa)) the chain is Cytoplasmic. The region spanning 135-202 (REAHLSSILD…QHDLYLSRYL (68 aa)) is the PAS domain. The 60-residue stretch at 203–262 (TTGERRIIGIGRVVTGERKDGATFPMELAVGEMHSVSGRFFTGFIRDLTERQNTEARLQE) folds into the PAC domain. Residues 282 to 497 (TLAHELNQPL…IFRFTLRTVD (216 aa)) enclose the Histidine kinase domain. His-285 carries the phosphohistidine; by autocatalysis modification.

The cofactor is heme.

It is found in the cell inner membrane. It catalyses the reaction ATP + protein L-histidine = ADP + protein N-phospho-L-histidine.. Its activity is regulated as follows. The heme moiety regulates the kinase activity. In terms of biological role, putative oxygen sensor; modulates the activity of FixJ, a transcriptional activator of nitrogen fixation fixK gene. FixL probably acts as a kinase that phosphorylates FixJ. In Azorhizobium caulinodans (strain ATCC 43989 / DSM 5975 / JCM 20966 / LMG 6465 / NBRC 14845 / NCIMB 13405 / ORS 571), this protein is Sensor protein FixL (fixL).